A 335-amino-acid polypeptide reads, in one-letter code: Biotin synthase (335 aa).

One can recognise a Radical SAM core domain in the interval Tyr43–Ala269. [4Fe-4S] cluster is bound by residues Cys61, Cys65, and Cys68. Positions 104, 137, 197, and 267 each coordinate [2Fe-2S] cluster.

It belongs to the radical SAM superfamily. Biotin synthase family. As to quaternary structure, homodimer. It depends on [4Fe-4S] cluster as a cofactor. Requires [2Fe-2S] cluster as cofactor.

The catalysed reaction is (4R,5S)-dethiobiotin + (sulfur carrier)-SH + 2 reduced [2Fe-2S]-[ferredoxin] + 2 S-adenosyl-L-methionine = (sulfur carrier)-H + biotin + 2 5'-deoxyadenosine + 2 L-methionine + 2 oxidized [2Fe-2S]-[ferredoxin]. The protein operates within cofactor biosynthesis; biotin biosynthesis; biotin from 7,8-diaminononanoate: step 2/2. In terms of biological role, catalyzes the conversion of dethiobiotin (DTB) to biotin by the insertion of a sulfur atom into dethiobiotin via a radical-based mechanism. This is Biotin synthase from Staphylococcus aureus (strain USA300).